Reading from the N-terminus, the 552-residue chain is Chaperonin GroEL 1 (552 aa).

Residues Thr30–Pro33, Lys51, Asp87–Thr91, Gly415, Asn479–Ala481, and Asp495 contribute to the ATP site.

Belongs to the chaperonin (HSP60) family. In terms of assembly, forms a cylinder of 14 subunits composed of two heptameric rings stacked back-to-back. Interacts with the co-chaperonin GroES.

It localises to the cytoplasm. The catalysed reaction is ATP + H2O + a folded polypeptide = ADP + phosphate + an unfolded polypeptide.. Functionally, together with its co-chaperonin GroES, plays an essential role in assisting protein folding. The GroEL-GroES system forms a nano-cage that allows encapsulation of the non-native substrate proteins and provides a physical environment optimized to promote and accelerate protein folding. The protein is Chaperonin GroEL 1 of Albidiferax ferrireducens (strain ATCC BAA-621 / DSM 15236 / T118) (Rhodoferax ferrireducens).